We begin with the raw amino-acid sequence, 222 residues long: MNTAIVALPPTLDPMFWIGPEGFFAAAMLPATLVIIFVETGLLFPLLPGESLLFTGGLLATKGTIDIWVLSPSVAVVAVLGDQIGYLIGRRIGPALFKKENSRFFKQHYVTESHAFFEKHGRWTIILARFLPFMRTFTPVIAGLSYMSYPLYLGFDIVGGILWGGGVTVAGYFLGNVPFVRQNLEKIILGILFVSLLPALIAAWHGYRSQSRTAKSELALPD.

A run of 4 helical transmembrane segments spans residues 23–43 (FFAA…TGLL), 67–87 (IWVL…IGYL), 157–177 (IVGG…LGNV), and 187–207 (IILG…WHGY).

Belongs to the DedA family.

It localises to the cell membrane. This is an uncharacterized protein from Mycobacterium leprae (strain TN).